The sequence spans 70 residues: Large ribosomal subunit protein uL29 (70 aa).

This sequence belongs to the universal ribosomal protein uL29 family.

This chain is Large ribosomal subunit protein uL29, found in Prochlorococcus marinus (strain MIT 9211).